Consider the following 37-residue polypeptide: Large ribosomal subunit protein bL36 (37 aa).

This sequence belongs to the bacterial ribosomal protein bL36 family.

The sequence is that of Large ribosomal subunit protein bL36 from Marinomonas sp. (strain MWYL1).